Here is a 386-residue protein sequence, read N- to C-terminus: FHA domain-containing protein At4g14490 (386 aa).

One can recognise an FHA domain in the interval 28 to 78; it reads IRVGRIVRGNEIAIKDAGISTKHLRIESDSGNWVIQDLGSSNGTLLNSNAL. Residues 286–311 are disordered; the sequence is KNKGKNKKADQKPLKSFENDEVTDSG. Basic and acidic residues predominate over residues 292-303; sequence KKADQKPLKSFE.

This chain is FHA domain-containing protein At4g14490, found in Arabidopsis thaliana (Mouse-ear cress).